Consider the following 476-residue polypeptide: Glutamate--tRNA ligase (476 aa).

Residues 9–19 (PSPTGLFHIGT) carry the 'HIGH' region motif. The 'KMSKS' region motif lies at 248–252 (KLSKR). K251 lines the ATP pocket.

The protein belongs to the class-I aminoacyl-tRNA synthetase family. Glutamate--tRNA ligase type 1 subfamily. Monomer.

Its subcellular location is the cytoplasm. The enzyme catalyses tRNA(Glu) + L-glutamate + ATP = L-glutamyl-tRNA(Glu) + AMP + diphosphate. Its function is as follows. Catalyzes the attachment of glutamate to tRNA(Glu) in a two-step reaction: glutamate is first activated by ATP to form Glu-AMP and then transferred to the acceptor end of tRNA(Glu). In Prochlorococcus marinus (strain AS9601), this protein is Glutamate--tRNA ligase.